Consider the following 366-residue polypeptide: Phospho-N-acetylmuramoyl-pentapeptide-transferase (366 aa).

Transmembrane regions (helical) follow at residues 27 to 47, 71 to 91, 93 to 113, 134 to 154, 174 to 194, 205 to 225, 245 to 265, 268 to 288, 294 to 314, and 343 to 363; these read AAMFTAALIVFLFGPKIIASL, TPTMGGLMILAGIVGSSLLWA, LSNVYVVATLLVTLGFGAIGF, LAIEFLIAGIAVFFMMEAAKI, ALLNVGYFFIVFGGFVIVSAG, GLAIVPVMIASAAFGLIAYLA, LAVILGSVIGAGLGFLWFNAP, AIFMGDTGSLALGGLIGTVAV, IVMVIIGGLFVMETLSVIIQV, and QVVIRFWIIAVGLAMLGLATL.

Belongs to the glycosyltransferase 4 family. MraY subfamily. Mg(2+) is required as a cofactor.

The protein localises to the cell inner membrane. The enzyme catalyses UDP-N-acetyl-alpha-D-muramoyl-L-alanyl-gamma-D-glutamyl-meso-2,6-diaminopimeloyl-D-alanyl-D-alanine + di-trans,octa-cis-undecaprenyl phosphate = di-trans,octa-cis-undecaprenyl diphospho-N-acetyl-alpha-D-muramoyl-L-alanyl-D-glutamyl-meso-2,6-diaminopimeloyl-D-alanyl-D-alanine + UMP. It functions in the pathway cell wall biogenesis; peptidoglycan biosynthesis. In terms of biological role, catalyzes the initial step of the lipid cycle reactions in the biosynthesis of the cell wall peptidoglycan: transfers peptidoglycan precursor phospho-MurNAc-pentapeptide from UDP-MurNAc-pentapeptide onto the lipid carrier undecaprenyl phosphate, yielding undecaprenyl-pyrophosphoryl-MurNAc-pentapeptide, known as lipid I. The sequence is that of Phospho-N-acetylmuramoyl-pentapeptide-transferase from Allorhizobium ampelinum (strain ATCC BAA-846 / DSM 112012 / S4) (Agrobacterium vitis (strain S4)).